Reading from the N-terminus, the 89-residue chain is Protein FAM25A (89 aa).

The protein belongs to the FAM25 family.

The protein is Protein FAM25A of Mus musculus (Mouse).